Here is a 515-residue protein sequence, read N- to C-terminus: MTTPSILTLHPGEMTFADLRRVWLAPTPVTLSGDCAAAIEASAATVQAIVARGEPAYGINTGFGKLARTQIATHELEHLQRNLILSHAVGTGQDLDDNVARLVLLMKAASLARGYSGVRRVVIDTLLAMLNAGIVPCIPSKGSVGASGDLAPLAHMTLAMLGEGDARVNGVRKPAREALAAAGIAPIALAAKEGLALINGTQVSTALALNGLFLAERLLQAATVAGALSVDAAKGSDAPFDPRVHTVRGQAGQIATAAVYRGLLAGSAIRRSHLVGDTRVQDPYSLRCQPQVMGACLDLIRQAGATLLTEANAVTDNPLVYADAGEVISGGNFHAEPVAFAADMLALAIAEIGALSERRIALLIDSTLSGLPPFLVEQPGLNSGFMIAHVTAAALASENKSLAHPASVDSLPTSANQEDHVSMATFAGRRLAEMAGNTATIVGIEALAAAQGIDFHRPLATSDALARAHTCIRSRVAYYGEDRLFAPDIEAARRLVLDGDLGDSCRAHLADLALA.

The 5-imidazolinone (Ala-Gly) cross-link spans Ala146–Gly148. Position 147 is a 2,3-didehydroalanine (Ser) (Ser147).

The protein belongs to the PAL/histidase family. In terms of processing, contains an active site 4-methylidene-imidazol-5-one (MIO), which is formed autocatalytically by cyclization and dehydration of residues Ala-Ser-Gly.

It localises to the cytoplasm. It catalyses the reaction L-histidine = trans-urocanate + NH4(+). It functions in the pathway amino-acid degradation; L-histidine degradation into L-glutamate; N-formimidoyl-L-glutamate from L-histidine: step 1/3. This chain is Histidine ammonia-lyase (hutH), found in Ralstonia nicotianae (strain ATCC BAA-1114 / GMI1000) (Ralstonia solanacearum).